A 192-amino-acid polypeptide reads, in one-letter code: Ion-translocating oxidoreductase complex subunit B (192 aa).

A hydrophobic region spans residues 1-26 (MSAVWIAVIAISLLGLIFGLILGYAS). Positions 32 to 91 (QDDPVVEKIDELLPQSQCGQCGYPGCRPYAEAVGAQGEKINRCAPGGEAVMLKIAALLNV) constitute a 4Fe-4S domain. 12 residues coordinate [4Fe-4S] cluster: Cys-49, Cys-52, Cys-57, Cys-74, Cys-117, Cys-120, Cys-123, Cys-127, Cys-147, Cys-150, Cys-153, and Cys-157. 4Fe-4S ferredoxin-type domains are found at residues 108–137 (MLAV…GATR) and 138–167 (AMHT…LVPV).

This sequence belongs to the 4Fe4S bacterial-type ferredoxin family. RnfB subfamily. In terms of assembly, the complex is composed of six subunits: RnfA, RnfB, RnfC, RnfD, RnfE and RnfG. [4Fe-4S] cluster is required as a cofactor.

It localises to the cell inner membrane. In terms of biological role, part of a membrane-bound complex that couples electron transfer with translocation of ions across the membrane. This is Ion-translocating oxidoreductase complex subunit B from Klebsiella pneumoniae (strain 342).